Consider the following 181-residue polypeptide: Oligoribonuclease (181 aa).

In terms of domain architecture, Exonuclease spans 8–171 (LIWIDLEMTG…QDIQESIAEL (164 aa)). Residue Tyr129 is part of the active site.

The protein belongs to the oligoribonuclease family.

The protein localises to the cytoplasm. 3'-to-5' exoribonuclease specific for small oligoribonucleotides. The sequence is that of Oligoribonuclease from Shewanella sp. (strain ANA-3).